The chain runs to 943 residues: Isoleucine--tRNA ligase (943 aa).

The short motif at 58 to 68 (PYANGSIHIGH) is the 'HIGH' region element. Residue glutamate 567 participates in L-isoleucyl-5'-AMP binding. A 'KMSKS' region motif is present at residues 608-612 (KMSKS). Lysine 611 contributes to the ATP binding site. Zn(2+) contacts are provided by cysteine 906, cysteine 909, cysteine 926, and cysteine 929.

The protein belongs to the class-I aminoacyl-tRNA synthetase family. IleS type 1 subfamily. Monomer. Zn(2+) serves as cofactor.

The protein localises to the cytoplasm. The enzyme catalyses tRNA(Ile) + L-isoleucine + ATP = L-isoleucyl-tRNA(Ile) + AMP + diphosphate. In terms of biological role, catalyzes the attachment of isoleucine to tRNA(Ile). As IleRS can inadvertently accommodate and process structurally similar amino acids such as valine, to avoid such errors it has two additional distinct tRNA(Ile)-dependent editing activities. One activity is designated as 'pretransfer' editing and involves the hydrolysis of activated Val-AMP. The other activity is designated 'posttransfer' editing and involves deacylation of mischarged Val-tRNA(Ile). The chain is Isoleucine--tRNA ligase from Pseudomonas fluorescens (strain ATCC BAA-477 / NRRL B-23932 / Pf-5).